A 202-amino-acid chain; its full sequence is uncharacterized protein (202 aa).

A disordered region spans residues 1–20; it reads MVGAVTQIADRPTDPSPWSP. Positions 19-79 constitute an HTH tetR-type domain; sequence SPRETELLAV…AAFIEGIRQV (61 aa).

This is an uncharacterized protein from Mycobacterium bovis (strain ATCC BAA-935 / AF2122/97).